Consider the following 55-residue polypeptide: Accessory gland-specific peptide 70A (55 aa).

A signal peptide spans 1-19; the sequence is MKTLSLFLVLVCLLGLVQS. A hydroxyproline mark is found at P28, P32, P34, and P38. A disulfide bridge connects residues C43 and C55.

Main cells of the accessory glands of males (paragonial gland).

Its subcellular location is the secreted. Functionally, represses female sexual receptivity and stimulates oviposition. This chain is Accessory gland-specific peptide 70A (Acp70A), found in Drosophila mauritiana (Fruit fly).